A 489-amino-acid polypeptide reads, in one-letter code: uncharacterized protein (489 aa).

Position 26 is a phosphothreonine (T26). Residue S27 is modified to Phosphoserine. The next 3 helical transmembrane spans lie at 63 to 83, 182 to 202, and 221 to 241; these read IVYLIIVACGSFIITGGIEFA, LVWSVPLWFLFWPATVGILCA, and VFKLIFGGGEGFVLTPWIAFL. 3 disordered regions span residues 260–312, 401–435, and 450–489; these read PKTS…APLE, STLLPQDGNAVHHDTDAPSLSNVRKSVDSPRVPPS, and PSINNVGGSTAPSVNNQEREYDYDDTSSRSSTLTERPVVH. Phosphoserine is present on S263. Over residues 268–282 the composition is skewed to polar residues; the sequence is QRGTSSSQPSENDAN. The segment covering 450–465 has biased composition (polar residues); the sequence is PSINNVGGSTAPSVNN. Over residues 477–489 the composition is skewed to low complexity; sequence SRSSTLTERPVVH.

The protein localises to the endoplasmic reticulum membrane. This is an uncharacterized protein from Schizosaccharomyces pombe (strain 972 / ATCC 24843) (Fission yeast).